The following is a 513-amino-acid chain: ATP synthase subunit alpha (513 aa).

171 to 178 (GDRQIGKT) contacts ATP.

The protein belongs to the ATPase alpha/beta chains family. In terms of assembly, F-type ATPases have 2 components, CF(1) - the catalytic core - and CF(0) - the membrane proton channel. CF(1) has five subunits: alpha(3), beta(3), gamma(1), delta(1), epsilon(1). CF(0) has three main subunits: a(1), b(2) and c(9-12). The alpha and beta chains form an alternating ring which encloses part of the gamma chain. CF(1) is attached to CF(0) by a central stalk formed by the gamma and epsilon chains, while a peripheral stalk is formed by the delta and b chains.

It localises to the cell membrane. The enzyme catalyses ATP + H2O + 4 H(+)(in) = ADP + phosphate + 5 H(+)(out). Functionally, produces ATP from ADP in the presence of a proton gradient across the membrane. The alpha chain is a regulatory subunit. The sequence is that of ATP synthase subunit alpha from Wolbachia pipientis wMel.